We begin with the raw amino-acid sequence, 331 residues long: Gem-associated protein 2 (331 aa).

Disordered stretches follow at residues 1–23, 101–130, and 151–222; these read MDEF…NEPL, SNRP…LIPQ, and NNNN…TKKP. The span at 11–21 shows a compositional bias: acidic residues; that stretch reads VGEEIEPDDNE. The span at 106-126 shows a compositional bias: low complexity; the sequence is NNNNNNNNNNNNNNNNNNNNN. The span at 165–215 shows a compositional bias: acidic residues; the sequence is DNQEDDDDDENNEDYEYNENKEEEEEEEEEEEEEEEVEEEEEEEEEEEEVV. Positions 173–224 form a coiled coil; the sequence is DENNEDYEYNENKEEEEEEEEEEEEEEEVEEEEEEEEEEEEVVDYSTKKPTL.

This sequence belongs to the gemin-2 family.

It is found in the nucleus. The protein resides in the gem. The protein localises to the cytoplasm. Its function is as follows. The SMN complex catalyzes the assembly of small nuclear ribonucleoproteins (snRNPs), the building blocks of the spliceosome, and thereby plays an important role in the splicing of cellular pre-mRNAs. Most spliceosomal snRNPs contain a common set of Sm proteins SNRPB, SNRPD1, SNRPD2, SNRPD3, SNRPE, SNRPF and SNRPG that assemble in a heptameric protein ring on the Sm site of the small nuclear RNA to form the core snRNP (Sm core). In the cytosol, the Sm proteins SNRPD1, SNRPD2, SNRPE, SNRPF and SNRPG (5Sm) are trapped in an inactive 6S pICln-Sm complex by the chaperone CLNS1A that controls the assembly of the core snRNP. To assemble core snRNPs, the SMN complex accepts the trapped 5Sm proteins from CLNS1A. Binding of snRNA inside 5Sm ultimately triggers eviction of the SMN complex, thereby allowing binding of SNRPD3 and SNRPB to complete assembly of the core snRNP. Within the SMN complex, GEMIN2 constrains the conformation of 5Sm, thereby promoting 5Sm binding to snRNA containing the snRNP code (a nonameric Sm site and a 3'-adjacent stem-loop), thus preventing progression of assembly until a cognate substrate is bound. May play an essential role in spliceosomal snRNP assembly in the cytoplasm and may be required for pre-mRNA splicing in the nucleus. The chain is Gem-associated protein 2 (gemin2) from Dictyostelium discoideum (Social amoeba).